Consider the following 161-residue polypeptide: Tick receptor for ospA (161 aa).

In terms of assembly, interacts with ospA protein from B.burgdorferi. In terms of processing, glycosylated. Specifically expressed in gut. Localizes predominantly in the intercellular spaces and luminal surface of the gut. In the gut, it localizes along tight junctions. Not expressed in salivary gland or hemolymph.

Its subcellular location is the cell membrane. Its function is as follows. Serves as a receptor for ospA protein of B.burgdorferi, the Lyme disease agent. Required for spirochetal colonization. Essential for pathogen adherence to the vector. This chain is Tick receptor for ospA (TROSPA), found in Ixodes scapularis (Black-legged tick).